A 248-amino-acid polypeptide reads, in one-letter code: Cell division protein ZapD (248 aa).

The protein belongs to the ZapD family. In terms of assembly, interacts with FtsZ.

The protein resides in the cytoplasm. Its function is as follows. Cell division factor that enhances FtsZ-ring assembly. Directly interacts with FtsZ and promotes bundling of FtsZ protofilaments, with a reduction in FtsZ GTPase activity. This chain is Cell division protein ZapD, found in Aliivibrio salmonicida (strain LFI1238) (Vibrio salmonicida (strain LFI1238)).